Reading from the N-terminus, the 198-residue chain is Endonuclease V (198 aa).

Mg(2+)-binding residues include D38 and D101.

It belongs to the endonuclease V family. Mg(2+) is required as a cofactor.

Its subcellular location is the cytoplasm. The enzyme catalyses Endonucleolytic cleavage at apurinic or apyrimidinic sites to products with a 5'-phosphate.. Functionally, DNA repair enzyme involved in the repair of deaminated bases. Selectively cleaves double-stranded DNA at the second phosphodiester bond 3' to a deoxyinosine leaving behind the intact lesion on the nicked DNA. This chain is Endonuclease V, found in Saccharolobus islandicus (strain Y.N.15.51 / Yellowstone #2) (Sulfolobus islandicus).